The sequence spans 122 residues: MARIAGVNIPTNKRVIIALQYIHGIGPKFAQEITEKVGIPTGRRVHELSDAEVLQIREAIDQGYQVEGDLRREVAMNVKRLMDLGCYRGLRHRRSLPVRGQRTHTNARTRKGPAKAIAGKKK.

The tract at residues 97-122 is disordered; the sequence is PVRGQRTHTNARTRKGPAKAIAGKKK.

The protein belongs to the universal ribosomal protein uS13 family. Part of the 30S ribosomal subunit. Forms a loose heterodimer with protein S19. Forms two bridges to the 50S subunit in the 70S ribosome.

Its function is as follows. Located at the top of the head of the 30S subunit, it contacts several helices of the 16S rRNA. In the 70S ribosome it contacts the 23S rRNA (bridge B1a) and protein L5 of the 50S subunit (bridge B1b), connecting the 2 subunits; these bridges are implicated in subunit movement. Contacts the tRNAs in the A and P-sites. The protein is Small ribosomal subunit protein uS13 of Bartonella tribocorum (strain CIP 105476 / IBS 506).